Consider the following 358-residue polypeptide: Probable D-xylulose reductase A (358 aa).

The Zn(2+) site is built by Cys47, His72, and Glu73. 182-187 (GAGPVG) is an NAD(+) binding site.

It belongs to the zinc-containing alcohol dehydrogenase family. Requires Zn(2+) as cofactor.

The enzyme catalyses xylitol + NAD(+) = D-xylulose + NADH + H(+). Its pathway is carbohydrate degradation; L-arabinose degradation via L-arabinitol; D-xylulose 5-phosphate from L-arabinose (fungal route): step 4/5. Functionally, xylitol dehydrogenase which catalyzes the conversion of xylitol to D-xylulose. Xylose is a major component of hemicelluloses such as xylan. Most fungi utilize D-xylose via three enzymatic reactions, xylose reductase (XR), xylitol dehydrogenase (XDH), and xylulokinase, to form xylulose 5-phosphate, which enters pentose phosphate pathway. In Aspergillus clavatus (strain ATCC 1007 / CBS 513.65 / DSM 816 / NCTC 3887 / NRRL 1 / QM 1276 / 107), this protein is Probable D-xylulose reductase A (xdhA).